The following is a 792-amino-acid chain: MYNHNLIEEKWLKKWKNKDVNRFESDSNKKKYYVLDMFPYPSAAGLHLGHVRAYTITDVISRYYKAKGFNVIHPIGFDAFGLPAEQYAINSNQNPGSWTDQNINNFINQLTSFGFDYDYHLSLKTTDPRYYKYTQWIFSELFKANLAELVDIDVNWCEQLGTVLANEEVLIDSNGNAVSERGSFSVEKRKMKQWVLKITTFADALLEGLDTLDWPEPIKEMQRNWIGKSKGVTINFQLKDHKEAIAIFTTKPQTIFGVSFLAVSTNHWLAKKIAETNKKVASFLKKQLQKTTTLKQKATLYDGIDLLTNAIHPLTNELIPVYVANYVIEGYGTDAIMGVGAHNENDNFFARKQKLKIINVIDKKERLQNSFAYNGLTTKEAQVAITNELISQNKAKLTTVYKLRDWIFSRQRYWGEPFPIIFDENNTPHLVEQLPVELPLLENYKPDGSGNSPLMRNQAWVNIVKDNIHYQRETNTMPQWAGSCWYYLGYLMLIKNPNFWPIDSKEAKKLFDQYLPVDLYVGGAEHAVLHLLYARFWHKFLFDKKLVSTKEPFQKLINQGMVLGPDGKKMSKSKGNTINPTPLVDSHGADALRLYLMFMGPISASLTWNDEGLNGMRRWLDRVYNFFFNHAVVTDQVSQETIFAYNLFLKNSYCHLDKHELNLVISEMMIFLNFLYKTKKISLNYAKGFLTVLSFFAPFLAEELNEKCGLEPFVVKQAISLVDYQLFETAKTKVILSINGKFKAAKEFTKGSLEIDVLESFKQDKEINDILNQPIERVVYVQDRIINVLLKK.

The short motif at 39–50 is the 'HIGH' region element; the sequence is PYPSAAGLHLGH. The 'KMSKS' region motif lies at 569 to 573; the sequence is KMSKS. Lysine 572 is an ATP binding site.

This sequence belongs to the class-I aminoacyl-tRNA synthetase family.

It localises to the cytoplasm. The enzyme catalyses tRNA(Leu) + L-leucine + ATP = L-leucyl-tRNA(Leu) + AMP + diphosphate. In Mycoplasma genitalium (strain ATCC 33530 / DSM 19775 / NCTC 10195 / G37) (Mycoplasmoides genitalium), this protein is Leucine--tRNA ligase.